Reading from the N-terminus, the 381-residue chain is Succinyl-diaminopimelate desuccinylase (381 aa).

Histidine 69 serves as a coordination point for Zn(2+). The active site involves aspartate 71. Zn(2+) is bound at residue aspartate 103. The Proton acceptor role is filled by glutamate 137. Glutamate 138, glutamate 166, and histidine 355 together coordinate Zn(2+).

It belongs to the peptidase M20A family. DapE subfamily. As to quaternary structure, homodimer. Zn(2+) is required as a cofactor. The cofactor is Co(2+).

The catalysed reaction is N-succinyl-(2S,6S)-2,6-diaminopimelate + H2O = (2S,6S)-2,6-diaminopimelate + succinate. The protein operates within amino-acid biosynthesis; L-lysine biosynthesis via DAP pathway; LL-2,6-diaminopimelate from (S)-tetrahydrodipicolinate (succinylase route): step 3/3. Functionally, catalyzes the hydrolysis of N-succinyl-L,L-diaminopimelic acid (SDAP), forming succinate and LL-2,6-diaminopimelate (DAP), an intermediate involved in the bacterial biosynthesis of lysine and meso-diaminopimelic acid, an essential component of bacterial cell walls. The chain is Succinyl-diaminopimelate desuccinylase from Rickettsia felis (strain ATCC VR-1525 / URRWXCal2) (Rickettsia azadi).